A 1653-amino-acid chain; its full sequence is Protein TOPAZ1 (1653 aa).

Disordered stretches follow at residues 1–88, 212–238, 553–591, 855–893, and 919–942; these read MPRA…PGID, GCMH…TDPS, KMKS…KKDR, PNVA…GSMK, and EVTH…SSDL. Composition is skewed to basic and acidic residues over residues 58-69 and 221-236; these read SGREEVESDKSA and SKSK…DKTD. A compositionally biased stretch (polar residues) spans 561-585; that stretch reads RSASEVVSNTTEDTSLTNMTHNLTG. Basic and acidic residues-rich tracts occupy residues 858–877 and 920–942; these read AEEH…KKEP and VTHE…SSDL.

The protein localises to the cytoplasm. Its subcellular location is the cytosol. Its function is as follows. Important for normal spermatogenesis and male fertility. Specifically required for progression to the post-meiotic stages of spermatocyte development. Seems to be necessary for normal expression levels of a number of testis-expressed gene transcripts, although its role in this process is unclear. This Bos taurus (Bovine) protein is Protein TOPAZ1 (TOPAZ1).